The sequence spans 203 residues: Recombination protein RecR (203 aa).

The segment at 56-71 (CAVCGNVSDNERCRIC) adopts a C4-type zinc-finger fold. One can recognise a Toprim domain in the interval 79-179 (SVVCIVEEPK…TVTRIASGLP (101 aa)).

Belongs to the RecR family.

In terms of biological role, may play a role in DNA repair. It seems to be involved in an RecBC-independent recombinational process of DNA repair. It may act with RecF and RecO. This chain is Recombination protein RecR, found in Mycobacterium bovis (strain ATCC BAA-935 / AF2122/97).